Consider the following 401-residue polypeptide: Nodulation protein E (401 aa).

The Ketosynthase family 3 (KS3) domain maps to 2–400; it reads DRRVVITGIG…GTNAVLAFRQ (399 aa). Residues Cys-162, His-294, and His-331 each act as for beta-ketoacyl synthase activity in the active site. Residues 329–348 form a helical membrane-spanning segment; the sequence is HAHCLGAASALEMIACVMAI.

The protein belongs to the thiolase-like superfamily. Beta-ketoacyl-ACP synthases family.

It localises to the cell inner membrane. Proposed to synthesize NOD factor fatty acyl chain. Involved in the synthesis of a highly unsaturated fatty acid moiety, which forms part of a lipo-oligosaccharide that is responsible for host specificity. This Rhizobium leguminosarum bv. trifolii protein is Nodulation protein E (nodE).